Consider the following 206-residue polypeptide: Putative 3-methyladenine DNA glycosylase (206 aa).

This sequence belongs to the DNA glycosylase MPG family.

The sequence is that of Putative 3-methyladenine DNA glycosylase from Rhodopseudomonas palustris (strain ATCC BAA-98 / CGA009).